The sequence spans 620 residues: MELLVLTVLLMGTGCISAPWAAWMPPKMAALSGTCVQLPCRFDYPEELRPASIGGLWYFGSPYPKNYPPVVARSRPSSAVHESFAGRASFLGDPTGRDCTLNIARLSEELAGKYYFRGDLGGYNQYSFSEHAELDVWAAPHLEVPHELVAGSEAEILCRVPDNCPPLRPLLTWTGTEELLDPIGKERIEDDLGSKSLLGSLRFRPRKEDLGRRVGCGVTFINSSLSFQADVGLDVQYEPQVVGLWGPTEVVEGSDVELGCEAEGRPAPLISWFRGSEVLREEPGRNLRLLLSNVGPDDGGSFSCVAENRHGRHNRSLQLRVAYAPRAPVINGSLWVVSGDPVSVTCRAESEPAAILTVLRGGKVMAAAIYEDHVTMEMRPARPEDGGTYSCVAENQHGASSTSFNISVEYPPLVLPASRCTAGGDGVRCVCMVNSIPDSSLVFELPTRNQTVSDGHRDFTAAPPGSDGSITGILTLRGPLEPRLLVLCAARNRHGTTARQLRFHHPGGLVWAKVGPVGAVVAFAIVIAVVCYLSQSRRKKGAGSPEVTPVQPMAGPGGDPDLDLRPQQVRWLRGAMERWALGVKEGSGAPQEVTPTSHPPMKPTRGPLEDPPEYAEIRVK.

Residues 1–17 (MELLVLTVLLMGTGCIS) form the signal peptide. Topologically, residues 18–516 (APWAAWMPPK…GGLVWAKVGP (499 aa)) are extracellular. Residues 28-106 (MAALSGTCVQ…RDCTLNIARL (79 aa)) enclose the Ig-like V-type domain. Intrachain disulfides connect cysteine 35–cysteine 164, cysteine 40–cysteine 99, and cysteine 158–cysteine 216. Residue arginine 117 participates in N-acetylneuraminate binding. 4 Ig-like C2-type domains span residues 151-233 (GSEA…DVGL), 239-322 (PQVV…LRVA), 325-407 (PRAP…FNIS), and 414-495 (VLPA…NRHG). The N-linked (GlcNAc...) asparagine glycan is linked to asparagine 222. Cysteine 260 and cysteine 304 are joined by a disulfide. Asparagine 314 and asparagine 331 each carry an N-linked (GlcNAc...) asparagine glycan. A disulfide bond links cysteine 346 and cysteine 391. Residue asparagine 405 is glycosylated (N-linked (GlcNAc...) asparagine). Disulfide bonds link cysteine 420–cysteine 429 and cysteine 431–cysteine 488. Asparagine 449 carries N-linked (GlcNAc...) asparagine glycosylation. A helical transmembrane segment spans residues 517–536 (VGAVVAFAIVIAVVCYLSQS). Over 537–620 (RRKKGAGSPE…PPEYAEIRVK (84 aa)) the chain is Cytoplasmic. Disordered stretches follow at residues 539 to 562 (KKGA…DPDL) and 583 to 620 (VKEG…IRVK).

This sequence belongs to the immunoglobulin superfamily. SIGLEC (sialic acid binding Ig-like lectin) family. Exclusively expressed by myelinating and nonmyelinating Schwann cells and oligodendrocytes.

It localises to the membrane. The sequence is that of Schwann cell myelin protein (SMP) from Coturnix japonica (Japanese quail).